Here is a 219-residue protein sequence, read N- to C-terminus: Dynein light chain Tctex-type 4 (219 aa).

A disordered region spans residues 1 to 84 (MAGRPVPAGR…RRPSLGPVPP (84 aa)). Basic and acidic residues predominate over residues 10–20 (RQEEELAKDPG). S64 is modified (phosphoserine).

Belongs to the dynein light chain Tctex-type family. As to quaternary structure, interacts with ENG/endoglin, TGFBR2 and TGFBR3. Interacts with PPP1CC.

The protein localises to the cell projection. Its subcellular location is the cilium. It is found in the flagellum. The protein resides in the cytoplasmic vesicle. It localises to the secretory vesicle. The protein localises to the acrosome. Its subcellular location is the cytoplasm. It is found in the cytoskeleton. The protein resides in the cilium axoneme. It localises to the nucleus. The protein localises to the microtubule organizing center. The protein is Dynein light chain Tctex-type 4 (DYNLT4) of Sus scrofa (Pig).